Reading from the N-terminus, the 691-residue chain is Elongation factor G (691 aa).

The region spanning 8–282 is the tr-type G domain; the sequence is NKTRNIGIMA…AVVEFLPAPV (275 aa). Residues 17–24, 81–85, and 135–138 each bind GTP; these read AHIDAGKT, DTPGH, and NKMD.

It belongs to the TRAFAC class translation factor GTPase superfamily. Classic translation factor GTPase family. EF-G/EF-2 subfamily.

It localises to the cytoplasm. Functionally, catalyzes the GTP-dependent ribosomal translocation step during translation elongation. During this step, the ribosome changes from the pre-translocational (PRE) to the post-translocational (POST) state as the newly formed A-site-bound peptidyl-tRNA and P-site-bound deacylated tRNA move to the P and E sites, respectively. Catalyzes the coordinated movement of the two tRNA molecules, the mRNA and conformational changes in the ribosome. This chain is Elongation factor G, found in Heliobacterium modesticaldum (strain ATCC 51547 / Ice1).